Here is a 55-residue protein sequence, read N- to C-terminus: Large ribosomal subunit protein bL33c (55 aa).

This sequence belongs to the bacterial ribosomal protein bL33 family.

The protein localises to the plastid. The protein resides in the chloroplast. This Emiliania huxleyi (Coccolithophore) protein is Large ribosomal subunit protein bL33c.